We begin with the raw amino-acid sequence, 408 residues long: LL-diaminopimelate aminotransferase (408 aa).

Substrate is bound by residues tyrosine 15 and glycine 42. Residues tyrosine 72, 108-109, tyrosine 132, asparagine 187, tyrosine 218, and 246-248 contribute to the pyridoxal 5'-phosphate site; these read SK and SFS. Residues lysine 109, tyrosine 132, and asparagine 187 each contribute to the substrate site. Lysine 249 carries the post-translational modification N6-(pyridoxal phosphate)lysine. Positions 257 and 292 each coordinate pyridoxal 5'-phosphate. 2 residues coordinate substrate: asparagine 292 and arginine 388.

The protein belongs to the class-I pyridoxal-phosphate-dependent aminotransferase family. LL-diaminopimelate aminotransferase subfamily. As to quaternary structure, homodimer. Pyridoxal 5'-phosphate is required as a cofactor.

It catalyses the reaction (2S,6S)-2,6-diaminopimelate + 2-oxoglutarate = (S)-2,3,4,5-tetrahydrodipicolinate + L-glutamate + H2O + H(+). Its pathway is amino-acid biosynthesis; L-lysine biosynthesis via DAP pathway; LL-2,6-diaminopimelate from (S)-tetrahydrodipicolinate (aminotransferase route): step 1/1. Involved in the synthesis of meso-diaminopimelate (m-DAP or DL-DAP), required for both lysine and peptidoglycan biosynthesis. Catalyzes the direct conversion of tetrahydrodipicolinate to LL-diaminopimelate. This chain is LL-diaminopimelate aminotransferase, found in Prochlorococcus marinus (strain AS9601).